A 268-amino-acid chain; its full sequence is Shikimate dehydrogenase (NADP(+)) (268 aa).

Shikimate-binding positions include 14–16 (SKS) and Thr61. Lys65 acts as the Proton acceptor in catalysis. Positions 86 and 102 each coordinate shikimate. Residues 126–130 (GAGGA), 149–154 (NRTFLK), and Met213 contribute to the NADP(+) site. Tyr215 serves as a coordination point for shikimate. NADP(+) is bound at residue Gly238.

This sequence belongs to the shikimate dehydrogenase family. In terms of assembly, homodimer.

It catalyses the reaction shikimate + NADP(+) = 3-dehydroshikimate + NADPH + H(+). Its pathway is metabolic intermediate biosynthesis; chorismate biosynthesis; chorismate from D-erythrose 4-phosphate and phosphoenolpyruvate: step 4/7. Functionally, involved in the biosynthesis of the chorismate, which leads to the biosynthesis of aromatic amino acids. Catalyzes the reversible NADPH linked reduction of 3-dehydroshikimate (DHSA) to yield shikimate (SA). This is Shikimate dehydrogenase (NADP(+)) from Haemophilus influenzae (strain PittGG).